A 96-amino-acid chain; its full sequence is Citrate lyase acyl carrier protein (96 aa).

S14 bears the O-(phosphoribosyl dephospho-coenzyme A)serine mark.

The protein belongs to the CitD family. Oligomer with a subunit composition of (alpha,beta,gamma)6.

The protein resides in the cytoplasm. Functionally, covalent carrier of the coenzyme of citrate lyase. This is Citrate lyase acyl carrier protein from Pectobacterium carotovorum subsp. carotovorum (strain PC1).